Reading from the N-terminus, the 326-residue chain is DNA-directed RNA polymerase subunit alpha (326 aa).

The interval 1-231 is alpha N-terminal domain (alpha-NTD); that stretch reads MQTALLKPKI…DQLSVFAALE (231 aa). The interval 247-326 is alpha C-terminal domain (alpha-CTD); that stretch reads IDPILLRPVD…ENWPPAGLEK (80 aa).

Belongs to the RNA polymerase alpha chain family. Homodimer. The RNAP catalytic core consists of 2 alpha, 1 beta, 1 beta' and 1 omega subunit. When a sigma factor is associated with the core the holoenzyme is formed, which can initiate transcription.

It carries out the reaction RNA(n) + a ribonucleoside 5'-triphosphate = RNA(n+1) + diphosphate. Functionally, DNA-dependent RNA polymerase catalyzes the transcription of DNA into RNA using the four ribonucleoside triphosphates as substrates. The sequence is that of DNA-directed RNA polymerase subunit alpha from Cupriavidus metallidurans (strain ATCC 43123 / DSM 2839 / NBRC 102507 / CH34) (Ralstonia metallidurans).